A 660-amino-acid polypeptide reads, in one-letter code: MTNIIELPEVLANQIAAGEVVERPASVVKELVENAIDAKSSQITVEIEESGLKMIQVTDNGEGMSHEDLPLSLRRHATSKIKSQSDLFRIRTLGFRGEALPSVASISKITIKTATKEVTHGSLLIATGGEIETLEAISTPTGTKIKVENLFYNTPARLKYMKSLQAELAHIVDVVNRLSLAHPEVAFTLISDGRQLTQTSGTGDLRQAIAGIYGLNTTKKMLAISNADLDFEVSGYVSLPELTRANRNYMTILVNGRYIKNFLLNRAILDGYGSKLMVGRFPIVVIDIQIDPYLADVNVHPTKQEVRISKERELMALISTAISESLKEQDLIPDALENLAKSSTRHFSKPEQTQLPLQSRGLYYDPQKNDFFVKESAVSEKIPETDFYFGAVDNSVKVEKAELLPHSEEVIGPSSVKHASRPQNTFTETDHPNLDLKNRQKLSQMLNRLENEEKSVFPELDYFGQMHGTYLFAQGKDGLFIIDQHAAQERVKYEYYRDKIGEADSSLQQLLVPYLFEFSGSDFINLQEKMALLNEVGIFLEVYGHNTFILREHPIWMKEEEIASGVYEMCDMLLLTNEVSIKTYRAELAIMMSCKRSIKANHSLDDYSARNLLLQLAQCQNPYNCPHGRPVLINFSKADMEKMFRRIQENHTSLRELGKY.

A disordered region spans residues 414 to 433 (SSVKHASRPQNTFTETDHPN).

It belongs to the DNA mismatch repair MutL/HexB family.

In terms of biological role, this protein is involved in the repair of mismatches in DNA. It is required for dam-dependent methyl-directed DNA mismatch repair. May act as a 'molecular matchmaker', a protein that promotes the formation of a stable complex between two or more DNA-binding proteins in an ATP-dependent manner without itself being part of a final effector complex. In Streptococcus pyogenes serotype M5 (strain Manfredo), this protein is DNA mismatch repair protein MutL.